Here is a 272-residue protein sequence, read N- to C-terminus: Thymidine phosphorylase (272 aa).

Belongs to the thymidine/pyrimidine-nucleoside phosphorylase family. As to quaternary structure, homodimer.

The catalysed reaction is thymidine + phosphate = 2-deoxy-alpha-D-ribose 1-phosphate + thymine. In terms of biological role, the enzymes which catalyze the reversible phosphorolysis of pyrimidine nucleosides are involved in the degradation of these compounds and in their utilization as carbon and energy sources, or in the rescue of pyrimidine bases for nucleotide synthesis. The polypeptide is Thymidine phosphorylase (deoA) (Metamycoplasma hominis (Mycoplasma hominis)).